We begin with the raw amino-acid sequence, 445 residues long: MKAYDFTQGNVLKQLVLFSMPIMLGNALQVSFQFIDSLWIGNLLGAKALGAAAVSSTIVLTVLSFILGLNNATLTILSQQKGKDDIKGMASYINAFVVLLTGLSIGFGAAGFFLSELLLRLLKTPESMIPLAETYLQIQFIGILFLFGYNFISTVLRALGDSKTPLRFIAFAVVLNTVLAPLFISVFRMGIAGAAYSTILSQGIAFLYGLFYVIKHKLVPFSIPRMPKWEESALILKLGIPAGLQMMVITGGMMAIMSVVNSYGDHVVSGFGAVQRLDSIITLPAMAAGTAVNSMAGQNIGIGNEKRVGTIARLGVIAVISCMLVIAVMIWVFGKYLIRLFISEPDAVAFGEQYLKWIAFFYPFIGVNFVLNGIVRAAGAMLQVLVLNLISFWVLRYPFTALFSAWLGQKGIGLGIGMSFLFSSCAAFLYYRYGRWKAMKLFTEK.

12 consecutive transmembrane segments (helical) span residues 15-35 (LVLF…FQFI), 49-69 (LGAA…ILGL), 95-115 (AFVV…FFLS), 136-156 (LQIQ…STVL), 168-188 (FIAF…SVFR), 194-214 (AAYS…FYVI), 240-260 (IPAG…MSVV), 277-297 (LDSI…SMAG), 314-334 (LGVI…WVFG), 355-375 (LKWI…NGIV), 384-404 (VLVL…ALFS), and 411-431 (GIGL…FLYY).

Belongs to the multi antimicrobial extrusion (MATE) (TC 2.A.66.1) family.

The protein localises to the cell membrane. The protein is Probable multidrug resistance protein YpnP (ypnP) of Bacillus subtilis (strain 168).